We begin with the raw amino-acid sequence, 135 residues long: Small ribosomal subunit protein uS12 (135 aa).

The residue at position 89 (D89) is a 3-methylthioaspartic acid. Residues R114–K135 are disordered. The segment covering A124 to K135 has biased composition (low complexity).

Belongs to the universal ribosomal protein uS12 family. In terms of assembly, part of the 30S ribosomal subunit. Contacts proteins S8 and S17. May interact with IF1 in the 30S initiation complex.

Its function is as follows. With S4 and S5 plays an important role in translational accuracy. Functionally, interacts with and stabilizes bases of the 16S rRNA that are involved in tRNA selection in the A site and with the mRNA backbone. Located at the interface of the 30S and 50S subunits, it traverses the body of the 30S subunit contacting proteins on the other side and probably holding the rRNA structure together. The combined cluster of proteins S8, S12 and S17 appears to hold together the shoulder and platform of the 30S subunit. This chain is Small ribosomal subunit protein uS12, found in Amoebophilus asiaticus (strain 5a2).